Here is a 70-residue protein sequence, read N- to C-terminus: Small ribosomal subunit protein bS21 (70 aa).

Belongs to the bacterial ribosomal protein bS21 family.

This chain is Small ribosomal subunit protein bS21, found in Helicobacter pylori (strain P12).